A 317-amino-acid chain; its full sequence is Aquaporin-2 (317 aa).

At 1–75 (MSLRDDLTIN…RSQEFKMQHR (75 aa)) the chain is on the cytoplasmic side. A helical membrane pass occupies residues 76 to 96 (EFLAEFIGTLILVLLTCGFCA). Over 97–108 (EQTLNIEKSKSW) the chain is Extracellular. The chain crosses the membrane as a helical span at residues 109–129 (LTSSLGSGLSVLIGICVAGHV). Topologically, residues 130–154 (SGGHLNPAITIAFWVFSGFPIRKVP) are cytoplasmic. Residues 135–137 (NPA) carry the NPA 1 motif. A helical transmembrane segment spans residues 155–175 (MYITAQLLGAFSGAALLYSIV). At 176–208 (EPAISQFDHGKRQILGELGTAGIFGTYPPLYVG) the chain is on the extracellular side. Residues 209-229 (TGSAVASEVVGTAMLLLVVMV) form a helical membrane-spanning segment. The Cytoplasmic portion of the chain corresponds to 230–242 (TGHPNNLPFRTAQ). A helical transmembrane segment spans residues 243–263 (GAMIALGVTTISLCIGYTSGF). Residues 264-295 (SLNPARDFGPRLFTAVAGWGIDVFTVHHYYAL) lie on the Extracellular side of the membrane. An NPA 2 motif is present at residues 266-268 (NPA). Residues 296 to 316 (VPMFAPILGGLAGGFIYTVFI) traverse the membrane as a helical segment. A topological domain (cytoplasmic) is located at residue Asp-317.

The protein belongs to the MIP/aquaporin (TC 1.A.8) family.

Its subcellular location is the cell membrane. It catalyses the reaction H2O(in) = H2O(out). The catalysed reaction is glycerol(in) = glycerol(out). In terms of biological role, water channel required to facilitate the transport of water across membranes. Contributes to water uptake of spores during the early stages of spore germination. Aquaporins AQP1 and AQP2 act as extracellular pH sensors and enable the spores to hydrate under favorable conditions and to commence germination. Wounded vegetables and fruit present acidic pH, so the optimal pH range for germination is adapted to the relevant host pH. This Rhizopus delemar (strain RA 99-880 / ATCC MYA-4621 / FGSC 9543 / NRRL 43880) (Mucormycosis agent) protein is Aquaporin-2.